We begin with the raw amino-acid sequence, 127 residues long: Small ribosomal subunit protein uS11 (127 aa).

It belongs to the universal ribosomal protein uS11 family. Part of the 30S ribosomal subunit. Interacts with proteins S7 and S18. Binds to IF-3.

Functionally, located on the platform of the 30S subunit, it bridges several disparate RNA helices of the 16S rRNA. Forms part of the Shine-Dalgarno cleft in the 70S ribosome. The sequence is that of Small ribosomal subunit protein uS11 from Flavobacterium johnsoniae (strain ATCC 17061 / DSM 2064 / JCM 8514 / BCRC 14874 / CCUG 350202 / NBRC 14942 / NCIMB 11054 / UW101) (Cytophaga johnsonae).